Consider the following 119-residue polypeptide: Large ribosomal subunit protein bL20c (119 aa).

It belongs to the bacterial ribosomal protein bL20 family.

It localises to the plastid. The protein resides in the chloroplast. In terms of biological role, binds directly to 23S ribosomal RNA and is necessary for the in vitro assembly process of the 50S ribosomal subunit. It is not involved in the protein synthesizing functions of that subunit. The chain is Large ribosomal subunit protein bL20c from Nandina domestica (Heavenly bamboo).